Here is a 1338-residue protein sequence, read N- to C-terminus: ABC-type transporter kk1G (1338 aa).

The disordered stretch occupies residues 1–21 (MSAIELPPLRSRSEEAARAEH). Over residues 11 to 21 (SRSEEAARAEH) the composition is skewed to basic and acidic residues. 6 helical membrane passes run 75–95 (YFLI…MPLM), 130–150 (LYIF…MLAI), 203–223 (HFAT…VALV), 230–250 (LIAS…FPPF), 312–332 (TMSP…WFGI), and 340–360 (ISSV…VMNI). Positions 80-372 (LCCFTSIGAG…VASPIISIAK (293 aa)) constitute an ABC transmembrane type-1 1 domain. Residues 405–706 (ITFINVAFSY…GDGVYYGLVH (302 aa)) enclose the ABC transporter 1 domain. Residue 440-447 (GPSGSGKS) participates in ATP binding. 2 disordered regions span residues 473-518 (EIPS…TCTG) and 715-747 (EDDD…HASR). 6 helical membrane-spanning segments follow: residues 777 to 797 (VCCI…YIFA), 816 to 836 (FWAG…YLLG), 895 to 917 (MSMA…VYGW), 919 to 941 (LSLV…RTRL), 1003 to 1023 (IIFA…FWYG), and 1037 to 1057 (FFIV…WFSF). Positions 777 to 1063 (VCCIGILGAG…WFSFTPSMAQ (287 aa)) constitute an ABC transmembrane type-1 2 domain. One can recognise an ABC transporter 2 domain in the interval 1096-1333 (IEFQHVSFKY…KGVYWQMCQA (238 aa)). An ATP-binding site is contributed by 1130–1137 (GSSGCGKS).

Belongs to the ABC transporter superfamily. ABCB family. Multidrug resistance exporter (TC 3.A.1.201) subfamily.

The protein resides in the cell membrane. The protein operates within secondary metabolite biosynthesis. Its function is as follows. ABC transporter; part of the gene cluster that mediates the biosynthesis of KK-1, a novel cyclic depsipeptide with 10 residues which is a promising active compound with high activity against many plant pathogens, especially Botrytis cinerea. Is probably directly involved in the secretion of KK-1 and thus confers self-tolerance against KK-1. This chain is ABC-type transporter kk1G, found in Curvularia clavata.